Reading from the N-terminus, the 70-residue chain is Large ribosomal subunit protein bL31 (70 aa).

4 residues coordinate Zn(2+): cysteine 16, cysteine 18, cysteine 37, and cysteine 40.

It belongs to the bacterial ribosomal protein bL31 family. Type A subfamily. In terms of assembly, part of the 50S ribosomal subunit. Requires Zn(2+) as cofactor.

Binds the 23S rRNA. The polypeptide is Large ribosomal subunit protein bL31 (Shewanella baltica (strain OS223)).